Here is a 437-residue protein sequence, read N- to C-terminus: Phosphomethylpyrimidine synthase (437 aa).

Substrate-binding positions include asparagine 69, methionine 98, tyrosine 127, histidine 163, serine 185–glycine 187, aspartate 226–arginine 229, and glutamate 265. Histidine 269 serves as a coordination point for Zn(2+). Position 292 (tyrosine 292) interacts with substrate. Histidine 333 lines the Zn(2+) pocket. Positions 409, 412, and 416 each coordinate [4Fe-4S] cluster.

This sequence belongs to the ThiC family. [4Fe-4S] cluster is required as a cofactor.

It carries out the reaction 5-amino-1-(5-phospho-beta-D-ribosyl)imidazole + S-adenosyl-L-methionine = 4-amino-2-methyl-5-(phosphooxymethyl)pyrimidine + CO + 5'-deoxyadenosine + formate + L-methionine + 3 H(+). It functions in the pathway cofactor biosynthesis; thiamine diphosphate biosynthesis. Functionally, catalyzes the synthesis of the hydroxymethylpyrimidine phosphate (HMP-P) moiety of thiamine from aminoimidazole ribotide (AIR) in a radical S-adenosyl-L-methionine (SAM)-dependent reaction. This chain is Phosphomethylpyrimidine synthase, found in Clostridium novyi (strain NT).